The chain runs to 258 residues: Imidazole glycerol phosphate synthase subunit HisF (258 aa).

Catalysis depends on residues D11 and D130.

Belongs to the HisA/HisF family. In terms of assembly, heterodimer of HisH and HisF.

It is found in the cytoplasm. It carries out the reaction 5-[(5-phospho-1-deoxy-D-ribulos-1-ylimino)methylamino]-1-(5-phospho-beta-D-ribosyl)imidazole-4-carboxamide + L-glutamine = D-erythro-1-(imidazol-4-yl)glycerol 3-phosphate + 5-amino-1-(5-phospho-beta-D-ribosyl)imidazole-4-carboxamide + L-glutamate + H(+). It functions in the pathway amino-acid biosynthesis; L-histidine biosynthesis; L-histidine from 5-phospho-alpha-D-ribose 1-diphosphate: step 5/9. Functionally, IGPS catalyzes the conversion of PRFAR and glutamine to IGP, AICAR and glutamate. The HisF subunit catalyzes the cyclization activity that produces IGP and AICAR from PRFAR using the ammonia provided by the HisH subunit. The sequence is that of Imidazole glycerol phosphate synthase subunit HisF from Haemophilus influenzae (strain 86-028NP).